A 1231-amino-acid chain; its full sequence is Multifunctional 2-oxoglutarate metabolism enzyme (1231 aa).

The tract at residues 1 to 41 (MANISSPFGQNEWLVEAMYRKFRDDPSSVDPSWHEFLVDYS) is 2-oxoglutarate dehydrogenase E1, N-terminal part. A compositionally biased stretch (basic and acidic residues) spans 24-37 (DDPSSVDPSWHEFL). The interval 24–56 (DDPSSVDPSWHEFLVDYSPEPTSQPAAEPTRVT) is disordered. Positions 42-88 (PEPTSQPAAEPTRVTSPLVAERAAAAAPQAPPKPADTAAAGNGVVAA) are linker. The succinyltransferase E2 stretch occupies residues 89–337 (LAAKTAVPPP…LRTIHELLLS (249 aa)). His316 functions as the Proton acceptor; for succinyltransferase activity in the catalytic mechanism. The interval 338–1231 (DGFWDEVFRE…QQEILDEAFG (894 aa)) is 2-oxoglutarate dehydrogenase E1, C-terminal part. Arg542 is a binding site for thiamine diphosphate. His581 and Ser606 together coordinate 2-oxoglutarate. Thiamine diphosphate contacts are provided by Ser606, Leu608, Asp649, Ala650, Ala651, and Asn682. Position 649 (Asp649) interacts with Mg(2+). 2 residues coordinate Mg(2+): Asn682 and Ile684. Positions 787–817 (DISMKEAEDALRDYQGQLERVFNEVRELEKH) form a coiled coil. His1024 is a binding site for 2-oxoglutarate. Residues Thr1042, Arg1058, Lys1093, Ser1096, Gln1146, Arg1153, and Arg1154 each coordinate acetyl-CoA.

This sequence belongs to the 2-oxoacid dehydrogenase family. Kgd subfamily. Homodimer. The 2-oxoglutarate dehydrogenase (ODH) complex contains multiple copies of three enzymatic components: 2-oxoglutarate dehydrogenase (E1), dihydrolipoamide succinyltransferase (E2) and lipoamide dehydrogenase (E3). Mg(2+) is required as a cofactor. It depends on thiamine diphosphate as a cofactor.

The enzyme catalyses glyoxylate + 2-oxoglutarate + H(+) = 2-hydroxy-3-oxoadipate + CO2. It catalyses the reaction 2-oxoglutarate + H(+) = succinate semialdehyde + CO2. It carries out the reaction N(6)-[(R)-lipoyl]-L-lysyl-[protein] + 2-oxoglutarate + H(+) = N(6)-[(R)-S(8)-succinyldihydrolipoyl]-L-lysyl-[protein] + CO2. The catalysed reaction is N(6)-[(R)-dihydrolipoyl]-L-lysyl-[protein] + succinyl-CoA = N(6)-[(R)-S(8)-succinyldihydrolipoyl]-L-lysyl-[protein] + CoA. It participates in carbohydrate metabolism; tricarboxylic acid cycle; succinate from 2-oxoglutarate (transferase route): step 1/2. Its pathway is carbohydrate metabolism; tricarboxylic acid cycle; succinyl-CoA from 2-oxoglutarate (dehydrogenase route): step 1/1. Alpha-ketoglutarate dehydrogenase and decarboxylase activities are inhibited by unphosphorylated GarA, and allosterically activated by acetyl-CoA, the main substrate of the TCA cycle. Shows three enzymatic activities that share a first common step, the attack of thiamine-PP on 2-oxoglutarate (alpha-ketoglutarate, KG), leading to the formation of an enamine-thiamine-PP intermediate upon decarboxylation. Thus, displays KGD activity, catalyzing the decarboxylation from five-carbon 2-oxoglutarate to four-carbon succinate semialdehyde (SSA). Also catalyzes C-C bond formation between the activated aldehyde formed after decarboxylation of alpha-ketoglutarate and the carbonyl of glyoxylate (GLX), to yield 2-hydroxy-3-oxoadipate (HOA), which spontaneously decarboxylates to form 5-hydroxylevulinate (HLA). And is also a component of the 2-oxoglutarate dehydrogenase (ODH) complex, that catalyzes the overall conversion of 2-oxoglutarate to succinyl-CoA and CO(2). The KG decarboxylase and KG dehydrogenase reactions provide two alternative, tightly regulated, pathways connecting the oxidative and reductive branches of the TCA cycle. This is Multifunctional 2-oxoglutarate metabolism enzyme (kgd) from Mycobacterium bovis (strain ATCC BAA-935 / AF2122/97).